Here is a 508-residue protein sequence, read N- to C-terminus: Cytochrome P450 4A12B (508 aa).

An N-terminal signal peptide occupies residues M1–L37. Residues E319 and C455 each contribute to the heme site.

It belongs to the cytochrome P450 family. Heme is required as a cofactor. As to expression, expressed in lung, but almost undetectable in the kidneys of five different strains.

It localises to the endoplasmic reticulum membrane. Its subcellular location is the microsome membrane. The catalysed reaction is an organic molecule + reduced [NADPH--hemoprotein reductase] + O2 = an alcohol + oxidized [NADPH--hemoprotein reductase] + H2O + H(+). The enzyme catalyses dodecanoate + reduced [NADPH--hemoprotein reductase] + O2 = 11-hydroxydodecanoate + oxidized [NADPH--hemoprotein reductase] + H2O + H(+). It catalyses the reaction dodecanoate + reduced [NADPH--hemoprotein reductase] + O2 = 12-hydroxydodecanoate + oxidized [NADPH--hemoprotein reductase] + H2O + H(+). It carries out the reaction (5Z,8Z,11Z,14Z)-eicosatetraenoate + reduced [NADPH--hemoprotein reductase] + O2 = 18-hydroxy-(5Z,8Z,11Z,14Z)-eicosatetraenoate + oxidized [NADPH--hemoprotein reductase] + H2O + H(+). The catalysed reaction is (5Z,8Z,11Z,14Z)-eicosatetraenoate + reduced [NADPH--hemoprotein reductase] + O2 = 19-hydroxy-(5Z,8Z,11Z,14Z)-eicosatetraenoate + oxidized [NADPH--hemoprotein reductase] + H2O + H(+). The enzyme catalyses (5Z,8Z,11Z,14Z)-eicosatetraenoate + reduced [NADPH--hemoprotein reductase] + O2 = 20-hydroxy-(5Z,8Z,11Z,14Z)-eicosatetraenoate + oxidized [NADPH--hemoprotein reductase] + H2O + H(+). It catalyses the reaction (5Z,8Z,11Z,14Z,17Z)-eicosapentaenoate + reduced [NADPH--hemoprotein reductase] + O2 = 19-hydroxy-(5Z,8Z,11Z,14Z,17Z)-eicosapentaenoate + oxidized [NADPH--hemoprotein reductase] + H2O + H(+). It carries out the reaction (5Z,8Z,11Z,14Z,17Z)-eicosapentaenoate + reduced [NADPH--hemoprotein reductase] + O2 = 20-hydroxy-(5Z,8Z,11Z,14Z,17Z)-eicosapentaenoate + oxidized [NADPH--hemoprotein reductase] + H2O + H(+). The catalysed reaction is (5Z,8Z,11Z,14Z,17Z)-eicosapentaenoate + reduced [NADPH--hemoprotein reductase] + O2 = (17S,18R)-epoxy-(5Z,8Z,11Z,14Z)-eicosatetraenoate + oxidized [NADPH--hemoprotein reductase] + H2O + H(+). The enzyme catalyses (5Z,8Z,11Z,14Z,17Z)-eicosapentaenoate + reduced [NADPH--hemoprotein reductase] + O2 = (17R,18S)-epoxy-(5Z,8Z,11Z,14Z)-eicosatetraenoate + oxidized [NADPH--hemoprotein reductase] + H2O + H(+). It participates in lipid metabolism; fatty acid metabolism. Its activity is regulated as follows. Activated by cytochrome b5. The Vmax almost doubles in the presence of cytochrome b5. Its function is as follows. A cytochrome P450 monooxygenase involved in the metabolism of fatty acids and their oxygenated derivatives (oxylipins). Mechanistically, uses molecular oxygen inserting one oxygen atom into a substrate, and reducing the second into a water molecule, with two electrons provided by NADPH via cytochrome P450 reductase (CPR; NADPH-ferrihemoprotein reductase). Catalyzes predominantly the oxidation of the terminal carbon (omega-oxidation) of saturated and unsaturated fatty acids. May act as a major omega-hydroxylase for dodecanoic (lauric) acid in kidney. Participates in omega-hydroxylation of (5Z,8Z,11Z,14Z)-eicosatetraenoic acid (arachidonate) to 20-hydroxyeicosatetraenoic acid (20-HETE), a signaling molecule acting both as vasoconstrictive and natriuretic with overall effect on arterial blood pressure. Acts as an omega-hydroxylase and epoxidase toward (5Z,8Z,11Z,14Z,17Z)-eicosapentaenoc acid (EPA). Catalyzes the epoxidation of the last double bond of EPA with no preferred stereoselectivity, producing both (R,S) and (S,R) stereoisomers. Can also catalyze the omega-1 and omega-2 oxidation of fatty acids with lower efficiency. This is Cytochrome P450 4A12B from Mus musculus (Mouse).